Consider the following 104-residue polypeptide: Large ribosomal subunit protein bL21 (104 aa).

Belongs to the bacterial ribosomal protein bL21 family. As to quaternary structure, part of the 50S ribosomal subunit. Contacts protein L20.

This protein binds to 23S rRNA in the presence of protein L20. The protein is Large ribosomal subunit protein bL21 of Streptococcus sanguinis (strain SK36).